Reading from the N-terminus, the 481-residue chain is Phosphatidylinositol 4-kinase type 2-beta (481 aa).

Over residues 1-11 the composition is skewed to basic and acidic residues; that stretch reads MEDPSEPDRLA. Residues 1–82 form a disordered region; it reads MEDPSEPDRL…VSRSSSAELD (82 aa). Phosphoserine occurs at positions 12, 17, and 45. Residues 53 to 64 show a composition bias toward acidic residues; the sequence is AGEEGEAGDEEL. The 332-residue stretch at 120–451 folds into the PI3K/PI4K catalytic domain; it reads GIFPERISQG…VQIPCVIVER (332 aa). A G-loop region spans residues 126-132; sequence ISQGSSG. ATP-binding residues include S133 and K148. Residues 153–155 are important for substrate binding; the sequence is EPY. Residues 161 to 174 are important for interaction with membranes; that stretch reads KWTKYVHKVCCPCC. ATP is bound by residues 257-260 and 271-272; these read QLFV and RK. Residues 264 to 272 are important for interaction with membranes; it reads KEAEYWLRK. The catalytic loop stretch occupies residues 301–309; that stretch reads RNTDRGNDN. Residues 342 to 362 form an activation loop region; it reads AIDNGLAFPFKHPDEWRAYPF. D344 contributes to the ATP binding site. The tract at residues 357 to 366 is important for interaction with membranes; that stretch reads WRAYPFHWAW.

The protein belongs to the PI3/PI4-kinase family. Type II PI4K subfamily. As to expression, widely expressed.

It localises to the cytoplasm. The protein resides in the cytosol. It is found in the golgi apparatus membrane. The protein localises to the endoplasmic reticulum membrane. Its subcellular location is the cell membrane. It localises to the early endosome membrane. The enzyme catalyses a 1,2-diacyl-sn-glycero-3-phospho-(1D-myo-inositol) + ATP = a 1,2-diacyl-sn-glycero-3-phospho-(1D-myo-inositol 4-phosphate) + ADP + H(+). With respect to regulation, inhibited by phenylarsine oxide and adenosine. Activation through membrane association is stimulated by active RAC1. Its function is as follows. Together with PI4K2A and the type III PI4Ks (PIK4CA and PIK4CB) it contributes to the overall PI4-kinase activity of the cell. This contribution may be especially significant in plasma membrane, endosomal and Golgi compartments. The phosphorylation of phosphatidylinositol (PI) to PI4P is the first committed step in the generation of phosphatidylinositol 4,5-bisphosphate (PIP2), a precursor of the second messenger inositol 1,4,5-trisphosphate (InsP3). Contributes to the production of InsP3 in stimulated cells and is likely to be involved in the regulation of vesicular trafficking. The sequence is that of Phosphatidylinositol 4-kinase type 2-beta (PI4K2B) from Homo sapiens (Human).